The primary structure comprises 212 residues: Inactive ribonuclease-like protein 10 (212 aa).

The N-terminal stretch at 1-24 (MKVTLVHLLFMMLLLLLGLGVGLG) is a signal peptide. 2 N-linked (GlcNAc...) asparagine glycosylation sites follow: Asn129 and Asn204.

This sequence belongs to the pancreatic ribonuclease family. In terms of processing, the N-terminus is blocked. Glycosylated. As to expression, male-specific expression in proximal caput of the epididymis.

Its subcellular location is the secreted. Secreted proximal epididymal protein required for post-testicular sperm maturation and male fertility. May be involved in sperm adhesion to the egg zona pellucida. Does not have ribonuclease activity. The polypeptide is Inactive ribonuclease-like protein 10 (Rnase10) (Rattus norvegicus (Rat)).